The chain runs to 92 residues: Small ribosomal subunit protein bS18c (92 aa).

This sequence belongs to the bacterial ribosomal protein bS18 family. Part of the 30S ribosomal subunit.

It is found in the plastid. The sequence is that of Small ribosomal subunit protein bS18c (rps18) from Epifagus virginiana (Beechdrops).